The primary structure comprises 220 residues: Glycerol-3-phosphate acyltransferase (220 aa).

5 helical membrane passes run 4–24, 53–73, 80–100, 116–136, and 138–158; these read LTIL…AVLV, VAAL…VYLA, PVYL…PIFF, MPIG…VLLV, and GYSS…TYLI. The interval 193 to 220 is disordered; that stretch reads WGRQAQRRQEEVGEMDDVAQKRDERDKK. Positions 210-220 are enriched in basic and acidic residues; it reads VAQKRDERDKK.

Belongs to the PlsY family. As to quaternary structure, probably interacts with PlsX.

The protein resides in the cell inner membrane. The catalysed reaction is an acyl phosphate + sn-glycerol 3-phosphate = a 1-acyl-sn-glycero-3-phosphate + phosphate. It participates in lipid metabolism; phospholipid metabolism. Its function is as follows. Catalyzes the transfer of an acyl group from acyl-phosphate (acyl-PO(4)) to glycerol-3-phosphate (G3P) to form lysophosphatidic acid (LPA). This enzyme utilizes acyl-phosphate as fatty acyl donor, but not acyl-CoA or acyl-ACP. This chain is Glycerol-3-phosphate acyltransferase, found in Aeromonas salmonicida (strain A449).